The following is a 293-amino-acid chain: Ribosomal protein L11 methyltransferase (293 aa).

S-adenosyl-L-methionine contacts are provided by Thr-145, Gly-166, Asp-188, and Asn-230.

Belongs to the methyltransferase superfamily. PrmA family.

The protein localises to the cytoplasm. It carries out the reaction L-lysyl-[protein] + 3 S-adenosyl-L-methionine = N(6),N(6),N(6)-trimethyl-L-lysyl-[protein] + 3 S-adenosyl-L-homocysteine + 3 H(+). Methylates ribosomal protein L11. The chain is Ribosomal protein L11 methyltransferase from Shewanella sp. (strain ANA-3).